The following is a 314-amino-acid chain: uncharacterized protein (314 aa).

This sequence belongs to the carbohydrate kinase PfkB family.

This is an uncharacterized protein from Buchnera aphidicola subsp. Schizaphis graminum (strain Sg).